Here is a 478-residue protein sequence, read N- to C-terminus: Cysteine--tRNA ligase (478 aa).

Position 37 (Cys-37) interacts with Zn(2+). Residues 39–49 (PTVYHYAHIGN) carry the 'HIGH' region motif. 3 residues coordinate Zn(2+): Cys-224, His-249, and Glu-253. A 'KMSKS' region motif is present at residues 281 to 285 (KMSKS). Lys-284 contacts ATP.

The protein belongs to the class-I aminoacyl-tRNA synthetase family. As to quaternary structure, monomer. Zn(2+) is required as a cofactor.

It localises to the cytoplasm. The catalysed reaction is tRNA(Cys) + L-cysteine + ATP = L-cysteinyl-tRNA(Cys) + AMP + diphosphate. The protein is Cysteine--tRNA ligase of Protochlamydia amoebophila (strain UWE25).